We begin with the raw amino-acid sequence, 317 residues long: Pantothenate kinase (317 aa).

99 to 106 (GSVSVGKS) lines the ATP pocket.

It belongs to the prokaryotic pantothenate kinase family.

The protein localises to the cytoplasm. The enzyme catalyses (R)-pantothenate + ATP = (R)-4'-phosphopantothenate + ADP + H(+). It functions in the pathway cofactor biosynthesis; coenzyme A biosynthesis; CoA from (R)-pantothenate: step 1/5. This Histophilus somni (strain 129Pt) (Haemophilus somnus) protein is Pantothenate kinase.